A 786-amino-acid polypeptide reads, in one-letter code: Probable glutamine--tRNA ligase (786 aa).

Over residues 181 to 198 the composition is skewed to basic and acidic residues; that stretch reads DLAPKKKEKKPEGPKPSK. Residues 181–218 form a disordered region; it reads DLAPKKKEKKPEGPKPSKDAAAAATAPGTKNQKEASPE. The 'HIGH' region motif lies at 276–286; sequence PEPNGVLHIGH. Residues 277–279 and 283–289 each bind ATP; these read EPN and HIGHAKA. L-glutamine-binding residues include Asp309 and Tyr444. ATP is bound by residues Thr463, 492 to 493, and 500 to 502; these read RL and VSK. The short motif at 499-503 is the 'KMSKS' region element; sequence VVSKR.

The protein belongs to the class-I aminoacyl-tRNA synthetase family.

The enzyme catalyses tRNA(Gln) + L-glutamine + ATP = L-glutaminyl-tRNA(Gln) + AMP + diphosphate. The polypeptide is Probable glutamine--tRNA ligase (Caenorhabditis elegans).